Consider the following 226-residue polypeptide: Urease accessory protein UreF (226 aa).

The protein belongs to the UreF family. In terms of assembly, ureD, UreF and UreG form a complex that acts as a GTP-hydrolysis-dependent molecular chaperone, activating the urease apoprotein by helping to assemble the nickel containing metallocenter of UreC. The UreE protein probably delivers the nickel.

The protein localises to the cytoplasm. Required for maturation of urease via the functional incorporation of the urease nickel metallocenter. In Burkholderia cenocepacia (strain HI2424), this protein is Urease accessory protein UreF.